The chain runs to 355 residues: UDP-3-O-acylglucosamine N-acyltransferase (355 aa).

Catalysis depends on His-258, which acts as the Proton acceptor.

It belongs to the transferase hexapeptide repeat family. LpxD subfamily. In terms of assembly, homotrimer.

It catalyses the reaction a UDP-3-O-[(3R)-3-hydroxyacyl]-alpha-D-glucosamine + a (3R)-hydroxyacyl-[ACP] = a UDP-2-N,3-O-bis[(3R)-3-hydroxyacyl]-alpha-D-glucosamine + holo-[ACP] + H(+). It functions in the pathway bacterial outer membrane biogenesis; LPS lipid A biosynthesis. Catalyzes the N-acylation of UDP-3-O-acylglucosamine using 3-hydroxyacyl-ACP as the acyl donor. Is involved in the biosynthesis of lipid A, a phosphorylated glycolipid that anchors the lipopolysaccharide to the outer membrane of the cell. The sequence is that of UDP-3-O-acylglucosamine N-acyltransferase from Agrobacterium fabrum (strain C58 / ATCC 33970) (Agrobacterium tumefaciens (strain C58)).